The following is a 279-amino-acid chain: Uroplakin-3b (279 aa).

The N-terminal stretch at 1–26 (MGLPSRQPRLWLLLLVVLGWPQPCLT) is a signal peptide. The Lumenal portion of the chain corresponds to 27-200 (LDLIPYTPRI…DTWPGRRSGD (174 aa)). Asn-77 is a glycosylation site (N-linked (GlcNAc...) asparagine). Residues 201–221 (MIIITSILSSLAGLLLLAFLA) form a helical membrane-spanning segment. Over 222 to 279 (ASSVRFSSLWWPEEAPEQLRIGSFMGKRYMTHHIPPSEAATLPVGCEPGLERFPSLSP) the chain is Cytoplasmic.

It belongs to the uroplakin-3 family. In terms of assembly, heterodimer with uroplakin-1B (UPK1B). As to expression, expression is urothelium-specific.

Its subcellular location is the cell membrane. Component of the asymmetric unit membrane (AUM); a highly specialized biomembrane elaborated by terminally differentiated urothelial cells. May play an important role in AUM-cytoskeleton interaction in terminally differentiated urothelial cells. It also contributes to the formation of urothelial glycocalyx which may play an important role in preventing bacterial adherence. The chain is Uroplakin-3b (UPK3B) from Bos taurus (Bovine).